The following is a 172-amino-acid chain: Adenine phosphoribosyltransferase (172 aa).

It belongs to the purine/pyrimidine phosphoribosyltransferase family. In terms of assembly, homodimer.

The protein localises to the cytoplasm. It carries out the reaction AMP + diphosphate = 5-phospho-alpha-D-ribose 1-diphosphate + adenine. It functions in the pathway purine metabolism; AMP biosynthesis via salvage pathway; AMP from adenine: step 1/1. Its function is as follows. Catalyzes a salvage reaction resulting in the formation of AMP, that is energically less costly than de novo synthesis. This is Adenine phosphoribosyltransferase from Staphylococcus epidermidis (strain ATCC 35984 / DSM 28319 / BCRC 17069 / CCUG 31568 / BM 3577 / RP62A).